The following is a 263-amino-acid chain: Purine nucleoside phosphorylase SAS1121 (263 aa).

Zn(2+) is bound by residues H79, C124, and H141.

This sequence belongs to the purine nucleoside phosphorylase YfiH/LACC1 family. As to quaternary structure, homodimer. Requires Cu(2+) as cofactor. The cofactor is Zn(2+).

It catalyses the reaction adenosine + phosphate = alpha-D-ribose 1-phosphate + adenine. It carries out the reaction S-methyl-5'-thioadenosine + phosphate = 5-(methylsulfanyl)-alpha-D-ribose 1-phosphate + adenine. The catalysed reaction is inosine + phosphate = alpha-D-ribose 1-phosphate + hypoxanthine. The enzyme catalyses adenosine + H2O + H(+) = inosine + NH4(+). In terms of biological role, purine nucleoside enzyme that catalyzes the phosphorolysis of adenosine and inosine nucleosides, yielding D-ribose 1-phosphate and the respective free bases, adenine and hypoxanthine. Also catalyzes the phosphorolysis of S-methyl-5'-thioadenosine into adenine and S-methyl-5-thio-alpha-D-ribose 1-phosphate. Also has adenosine deaminase activity. This Staphylococcus aureus (strain MSSA476) protein is Purine nucleoside phosphorylase SAS1121.